The primary structure comprises 338 residues: 1-aminocyclopropane-1-carboxylate deaminase (338 aa).

At lysine 51 the chain carries N6-(pyridoxal phosphate)lysine. The active-site Nucleophile is the serine 78.

The protein belongs to the ACC deaminase/D-cysteine desulfhydrase family. In terms of assembly, homotrimer. The cofactor is pyridoxal 5'-phosphate.

The enzyme catalyses 1-aminocyclopropane-1-carboxylate + H2O = 2-oxobutanoate + NH4(+). Its function is as follows. Catalyzes a cyclopropane ring-opening reaction, the irreversible conversion of 1-aminocyclopropane-1-carboxylate (ACC) to ammonia and alpha-ketobutyrate. Allows growth on ACC as a nitrogen source. This chain is 1-aminocyclopropane-1-carboxylate deaminase, found in Burkholderia orbicola (strain MC0-3).